A 205-amino-acid chain; its full sequence is Rho-related protein racI (205 aa).

12–19 (GDSKTGKT) is a GTP binding site. An Effector region motif is present at residues 34–42 (YVPSHVDAT). Residues 59–63 (DSSAL) and 119–122 (TKCD) contribute to the GTP site. Cys-202 carries the post-translational modification Cysteine methyl ester. Residue Cys-202 is the site of S-geranylgeranyl cysteine attachment. Residues 203 to 205 (IIQ) constitute a propeptide, removed in mature form.

This sequence belongs to the small GTPase superfamily. Rho family.

Its subcellular location is the cell membrane. This chain is Rho-related protein racI (racI), found in Dictyostelium discoideum (Social amoeba).